We begin with the raw amino-acid sequence, 822 residues long: Putative endoplasmic reticulum metallopeptidase 1 (822 aa).

The Cytoplasmic segment spans residues 1 to 14; sequence MVLVCASSSKCKRN. The chain crosses the membrane as a helical span at residues 15–35; sequence TFLQLAMVLFAVVMARIALYF. Residues 36-365 lie on the Lumenal side of the membrane; sequence HNHLDEPLVD…FNSLFFMYSK (330 aa). N-linked (GlcNAc...) asparagine glycosylation occurs at Asn146. Zn(2+) contacts are provided by His161 and Asp173. Residue Glu207 is the Proton acceptor of the active site. Residues Glu208 and Glu234 each coordinate Zn(2+). An N-linked (GlcNAc...) asparagine glycan is attached at Asn291. A Zn(2+)-binding site is contributed by His307. A helical membrane pass occupies residues 366–384; it reads LTSKILNTLVGGLGILLTL. Residues 385–392 are Cytoplasmic-facing; sequence RGSEGSFT. The helical transmembrane segment at 393–413 threads the bilayer; the sequence is VALIAQVISIAGIFVIPNIWA. Over 414-431 the chain is Lumenal; that stretch reads YILGNVLDCGMSWFRNEY. A helical membrane pass occupies residues 432 to 452; the sequence is WPLFIYLPAIFASLFFTESLF. Residues 453–463 are Cytoplasmic-facing; sequence KRSEHLALRAT. A helical transmembrane segment spans residues 464 to 484; the sequence is IFIFSLLTFIPLPSAYLFTII. A topological domain (lumenal) is located at residue Asp485. A helical membrane pass occupies residues 486 to 506; the sequence is FFMVFALFLNDKILAKPGTVH. Over 507–514 the chain is Cytoplasmic; sequence PLTYFIGS. The helical transmembrane segment at 515–535 threads the bilayer; sequence IGAMTVGFESAINLLEIFVPL. Residues 536 to 547 lie on the Lumenal side of the membrane; it reads TGRIGTDKVADN. The chain crosses the membrane as a helical span at residues 548 to 568; it reads VVATVCVCGFNIYFPLMSPWI. The Cytoplasmic segment spans residues 569–575; it reads QRFRSRC. A helical membrane pass occupies residues 576–596; the sequence is CFRLGLLFSIFVVGFSSFILA. At 597–822 the chain is on the lumenal side; the sequence is KQDTYYDSLH…GVVSGNFKLE (226 aa). 4 N-linked (GlcNAc...) asparagine glycosylation sites follow: Asn617, Asn682, Asn706, and Asn758.

This sequence belongs to the peptidase M28 family. M28B subfamily. Zn(2+) is required as a cofactor.

It localises to the endoplasmic reticulum membrane. This Schizosaccharomyces pombe (strain 972 / ATCC 24843) (Fission yeast) protein is Putative endoplasmic reticulum metallopeptidase 1.